A 281-amino-acid polypeptide reads, in one-letter code: Phosphatidylserine decarboxylase proenzyme (281 aa).

Residues Asp-90, His-143, and Ser-248 each act as charge relay system; for autoendoproteolytic cleavage activity in the active site. Ser-248 functions as the Schiff-base intermediate with substrate; via pyruvic acid; for decarboxylase activity in the catalytic mechanism. Position 248 is a pyruvic acid (Ser); by autocatalysis (Ser-248).

It belongs to the phosphatidylserine decarboxylase family. PSD-B subfamily. Prokaryotic type I sub-subfamily. Heterodimer of a large membrane-associated beta subunit and a small pyruvoyl-containing alpha subunit. The cofactor is pyruvate. In terms of processing, is synthesized initially as an inactive proenzyme. Formation of the active enzyme involves a self-maturation process in which the active site pyruvoyl group is generated from an internal serine residue via an autocatalytic post-translational modification. Two non-identical subunits are generated from the proenzyme in this reaction, and the pyruvate is formed at the N-terminus of the alpha chain, which is derived from the carboxyl end of the proenzyme. The autoendoproteolytic cleavage occurs by a canonical serine protease mechanism, in which the side chain hydroxyl group of the serine supplies its oxygen atom to form the C-terminus of the beta chain, while the remainder of the serine residue undergoes an oxidative deamination to produce ammonia and the pyruvoyl prosthetic group on the alpha chain. During this reaction, the Ser that is part of the protease active site of the proenzyme becomes the pyruvoyl prosthetic group, which constitutes an essential element of the active site of the mature decarboxylase.

It is found in the cell membrane. It carries out the reaction a 1,2-diacyl-sn-glycero-3-phospho-L-serine + H(+) = a 1,2-diacyl-sn-glycero-3-phosphoethanolamine + CO2. The protein operates within phospholipid metabolism; phosphatidylethanolamine biosynthesis; phosphatidylethanolamine from CDP-diacylglycerol: step 2/2. Functionally, catalyzes the formation of phosphatidylethanolamine (PtdEtn) from phosphatidylserine (PtdSer). This is Phosphatidylserine decarboxylase proenzyme from Francisella philomiragia subsp. philomiragia (strain ATCC 25017 / CCUG 19701 / FSC 153 / O#319-036).